The chain runs to 476 residues: Rab-3A-interacting protein (476 aa).

A phosphoserine; by PKB/AKT1 mark is found at Ser163 and Ser165. Residues 165–260 adopt a coiled-coil conformation; sequence SVLEVREKGY…EVAALKTLVL (96 aa). The tract at residues 262 to 297 is disordered; it reads SSPTSPTQEPLPGGKTPFKKGHTRNKSTSSAMSGSH. Phosphoserine is present on residues Ser263, Ser266, Ser288, and Ser296. Over residues 287 to 297 the composition is skewed to polar residues; that stretch reads KSTSSAMSGSH. Residues 435-444 form an important for RAB11A binding region; it reads TYIRYIQQGL.

The protein belongs to the SEC2 family. As to quaternary structure, homodimer. Interacts with the N-terminal region of SSX2. Interacts with the GDP-bound forms of RAB8A and RAB8B. The interaction with RAB8A is prevented by phosphorylation of RAB8A at 'Thr-72'. Interacts with the GDP-bound forms of RAB3A and RAB3D. Interacts with DCDC1. Interacts (via the N-terminal region) with TRAPPC14; this interaction mediates RAB3IP association with the TRAPP II complex. Forms a heterotetramer with RAB11A where RAB3IP homodimer binds two RAB11A subunits. Forms a complex with RAB11A and RAB11FIP3, probably a heterohexamer with two of each protein subunit, where Rabin8/RAB3IP and RAB11FIP3 simultaneously bind to RAB11A; the complex promotes preciliary trafficking. Forms a complex containing RAB11A, ASAP1, RAB3IP, RAP11FIP3 and ARF4; the complex promotes preciliary trafficking; the complex binds to RHO in photoreceptor cells and promotes RHO ciliary transport. Phosphorylated by AKT1; the phosphorylation alters its GEF activity. In terms of tissue distribution, expressed in brain, kidney, heart, pancreas and placenta. Not detected in skeletal muscle or liver.

Its subcellular location is the cytoplasm. The protein resides in the nucleus. It is found in the cytoskeleton. It localises to the cell projection. The protein localises to the lamellipodium. Its subcellular location is the vesicle. The protein resides in the microtubule organizing center. It is found in the centrosome. Phosphorylation by ATK1 alters its GEF activity. Complex formation with RAB11A and RAB11FIP3 and ciliogenesis function are competitively inhibited by RAB11A-WDR44 interaction. Its function is as follows. Guanine nucleotide exchange factor (GEF) which may activate RAB8A and RAB8B. Promotes the exchange of GDP to GTP, converting inactive GDP-bound Rab proteins into their active GTP-bound form. Mediates the release of GDP from RAB8A and RAB8B but not from RAB3A or RAB5. Modulates actin organization and promotes polarized transport of RAB8A-specific vesicles to the cell surface. Together with RAB11A, RAB8A, the exocyst complex, PARD3, PRKCI, ANXA2, CDC42 and DNMBP promotes transcytosis of PODXL to the apical membrane initiation sites (AMIS), apical surface formation and lumenogenesis. Part of the ciliary targeting complex containing Rab11, ASAP1, RAB3IP and RAB11FIP3 and ARF4 that promotes RAB3IP preciliary vesicle trafficking to mother centriole and ciliogenesis initiation. This is Rab-3A-interacting protein from Homo sapiens (Human).